The chain runs to 439 residues: Histidine--tRNA ligase (439 aa).

Belongs to the class-II aminoacyl-tRNA synthetase family. As to quaternary structure, homodimer.

It localises to the cytoplasm. The catalysed reaction is tRNA(His) + L-histidine + ATP = L-histidyl-tRNA(His) + AMP + diphosphate + H(+). This Leptospira interrogans serogroup Icterohaemorrhagiae serovar copenhageni (strain Fiocruz L1-130) protein is Histidine--tRNA ligase.